The primary structure comprises 293 residues: 4-diphosphocytidyl-2-C-methyl-D-erythritol kinase (293 aa).

Residue Lys10 is part of the active site. 94-104 serves as a coordination point for ATP; the sequence is PVSAGLAGGSS. The active site involves Asp136.

It belongs to the GHMP kinase family. IspE subfamily.

The catalysed reaction is 4-CDP-2-C-methyl-D-erythritol + ATP = 4-CDP-2-C-methyl-D-erythritol 2-phosphate + ADP + H(+). Its pathway is isoprenoid biosynthesis; isopentenyl diphosphate biosynthesis via DXP pathway; isopentenyl diphosphate from 1-deoxy-D-xylulose 5-phosphate: step 3/6. In terms of biological role, catalyzes the phosphorylation of the position 2 hydroxy group of 4-diphosphocytidyl-2C-methyl-D-erythritol. In Listeria monocytogenes serotype 4b (strain CLIP80459), this protein is 4-diphosphocytidyl-2-C-methyl-D-erythritol kinase.